A 142-amino-acid polypeptide reads, in one-letter code: Holo-[acyl-carrier-protein] synthase (142 aa).

Mg(2+) contacts are provided by Asp8 and Glu57.

Belongs to the P-Pant transferase superfamily. AcpS family. It depends on Mg(2+) as a cofactor.

The protein resides in the cytoplasm. The enzyme catalyses apo-[ACP] + CoA = holo-[ACP] + adenosine 3',5'-bisphosphate + H(+). Its function is as follows. Transfers the 4'-phosphopantetheine moiety from coenzyme A to a Ser of acyl-carrier-protein. The chain is Holo-[acyl-carrier-protein] synthase from Ruegeria sp. (strain TM1040) (Silicibacter sp.).